We begin with the raw amino-acid sequence, 446 residues long: Glutamine synthetase (446 aa).

In terms of domain architecture, GS beta-grasp spans 15 to 102 (RDIRFVRLWF…MFCDITMPDG (88 aa)). Residues 109-446 (PRHVLRRQLT…PYELRTYLSL (338 aa)) form the GS catalytic domain. Residues Glu-132 and Glu-134 each coordinate Mg(2+). Glu-184 serves as a coordination point for ATP. Positions 189 and 196 each coordinate Mg(2+). Gly-241 contacts L-glutamate. His-245 is a binding site for Mg(2+). ATP contacts are provided by residues 247 to 249 (HMS) and Ser-249. L-glutamate is bound by residues Arg-298, Glu-304, and Arg-316. Residues Arg-316 and Arg-321 each contribute to the ATP site. Mg(2+) is bound at residue Glu-336. An L-glutamate-binding site is contributed by Arg-338.

It belongs to the glutamine synthetase family. As to quaternary structure, oligomer of 12 subunits arranged in the form of two hexagons. In its feedback-inhibited form, interacts with TnrA in order to block its DNA-binding activity. It depends on Mg(2+) as a cofactor.

It localises to the cytoplasm. It carries out the reaction L-glutamate + NH4(+) + ATP = L-glutamine + ADP + phosphate + H(+). With respect to regulation, inhibited by glutamine. In terms of biological role, glutamine synthetase (GS) is an unusual multitasking protein that functions as an enzyme, a transcription coregulator, and a chaperone in ammonium assimilation and in the regulation of genes involved in nitrogen metabolism. It catalyzes the ATP-dependent biosynthesis of glutamine from glutamate and ammonia. Feedback-inhibited GlnA also interacts with and regulates the activity of the transcriptional regulator TnrA. During nitrogen limitation, TnrA is in its DNA-binding active state and turns on the transcription of genes required for nitrogen assimilation. Under conditions of nitrogen excess, feedback-inhibited GlnA forms a stable complex with TnrA, which inhibits its DNA-binding activity. In contrast, feedback-inhibited GlnA acts as a chaperone to stabilize the DNA-binding activity of GlnR, which represses the transcription of nitrogen assimilation genes. The chain is Glutamine synthetase from Mycobacterium bovis (strain ATCC BAA-935 / AF2122/97).